Reading from the N-terminus, the 121-residue chain is Trypsin/alpha-amylase inhibitor CMX2 (121 aa).

An N-terminal signal peptide occupies residues 1–24; that stretch reads MAFKHQLILSTAILLAVLAAASAS.

The protein belongs to the protease inhibitor I6 (cereal trypsin/alpha-amylase inhibitor) family.

It is found in the secreted. In Triticum aestivum (Wheat), this protein is Trypsin/alpha-amylase inhibitor CMX2.